A 539-amino-acid chain; its full sequence is Eukaryotic translation initiation factor 3 subunit L (539 aa).

The region spanning 306–514 is the PCI domain; the sequence is TFSDILLYVQ…IHIADTKVSH (209 aa).

It belongs to the eIF-3 subunit L family. In terms of assembly, component of the eukaryotic translation initiation factor 3 (eIF-3) complex. The eIF-3 complex interacts with pix.

Its subcellular location is the cytoplasm. In terms of biological role, component of the eukaryotic translation initiation factor 3 (eIF-3) complex, which is involved in protein synthesis of a specialized repertoire of mRNAs and, together with other initiation factors, stimulates binding of mRNA and methionyl-tRNAi to the 40S ribosome. The eIF-3 complex specifically targets and initiates translation of a subset of mRNAs involved in cell proliferation. This is Eukaryotic translation initiation factor 3 subunit L from Drosophila willistoni (Fruit fly).